Here is a 300-residue protein sequence, read N- to C-terminus: 4-hydroxy-tetrahydrodipicolinate synthase (300 aa).

Thr46 lines the pyruvate pocket. The active-site Proton donor/acceptor is Tyr134. Lys162 (schiff-base intermediate with substrate) is an active-site residue. Position 204 (Val204) interacts with pyruvate.

The protein belongs to the DapA family. As to quaternary structure, homotetramer; dimer of dimers.

Its subcellular location is the cytoplasm. The enzyme catalyses L-aspartate 4-semialdehyde + pyruvate = (2S,4S)-4-hydroxy-2,3,4,5-tetrahydrodipicolinate + H2O + H(+). Its pathway is amino-acid biosynthesis; L-lysine biosynthesis via DAP pathway; (S)-tetrahydrodipicolinate from L-aspartate: step 3/4. Functionally, catalyzes the condensation of (S)-aspartate-beta-semialdehyde [(S)-ASA] and pyruvate to 4-hydroxy-tetrahydrodipicolinate (HTPA). The protein is 4-hydroxy-tetrahydrodipicolinate synthase of Heliobacterium modesticaldum (strain ATCC 51547 / Ice1).